The following is a 201-amino-acid chain: Large ribosomal subunit protein uL4 (201 aa).

Positions 46–71 are disordered; sequence QKTRAEVIGSGKKPWRQKGTGRARAG.

The protein belongs to the universal ribosomal protein uL4 family. In terms of assembly, part of the 50S ribosomal subunit.

One of the primary rRNA binding proteins, this protein initially binds near the 5'-end of the 23S rRNA. It is important during the early stages of 50S assembly. It makes multiple contacts with different domains of the 23S rRNA in the assembled 50S subunit and ribosome. In terms of biological role, forms part of the polypeptide exit tunnel. The polypeptide is Large ribosomal subunit protein uL4 (Shewanella sediminis (strain HAW-EB3)).